The primary structure comprises 154 residues: Myoglobin (154 aa).

The Globin domain occupies 2 to 148; it reads GLSDGEWQLV…FRNDIAAKYK (147 aa). S4 carries the post-translational modification Phosphoserine. H65 contacts nitrite. H65 serves as a coordination point for O2. A Phosphothreonine modification is found at T68. H94 contributes to the heme b binding site.

Belongs to the globin family. Monomeric.

The protein resides in the cytoplasm. It is found in the sarcoplasm. The catalysed reaction is Fe(III)-heme b-[protein] + nitric oxide + H2O = Fe(II)-heme b-[protein] + nitrite + 2 H(+). The enzyme catalyses H2O2 + AH2 = A + 2 H2O. In terms of biological role, monomeric heme protein which primary function is to store oxygen and facilitate its diffusion within muscle tissues. Reversibly binds oxygen through a pentacoordinated heme iron and enables its timely and efficient release as needed during periods of heightened demand. Depending on the oxidative conditions of tissues and cells, and in addition to its ability to bind oxygen, it also has a nitrite reductase activity whereby it regulates the production of bioactive nitric oxide. Under stress conditions, like hypoxia and anoxia, it also protects cells against reactive oxygen species thanks to its pseudoperoxidase activity. The chain is Myoglobin (MB) from Spalax ehrenbergi (Middle East blind mole rat).